We begin with the raw amino-acid sequence, 505 residues long: RNA-splicing ligase RtcB homolog (505 aa).

Residues aspartate 119, cysteine 122, histidine 227, histidine 259, and histidine 353 each coordinate Mn(2+). Residue 226–230 (NHYAE) participates in GMP binding. Residues 353–354 (HN), 402–405 (GGTM), serine 409, 428–431 (HGAG), and lysine 504 each bind GMP. Catalysis depends on histidine 428, which acts as the GMP-histidine intermediate.

The protein belongs to the RtcB family. As to quaternary structure, catalytic component of the tRNA-splicing ligase complex. The cofactor is Mn(2+).

It carries out the reaction a 3'-end 3'-phospho-ribonucleotide-RNA + a 5'-end dephospho-ribonucleoside-RNA + GTP = a ribonucleotidyl-ribonucleotide-RNA + GMP + diphosphate. The enzyme catalyses a 3'-end 2',3'-cyclophospho-ribonucleotide-RNA + a 5'-end dephospho-ribonucleoside-RNA + GTP + H2O = a ribonucleotidyl-ribonucleotide-RNA + GMP + diphosphate + H(+). Its function is as follows. Catalytic subunit of the tRNA-splicing ligase complex that acts by directly joining spliced tRNA halves to mature-sized tRNAs by incorporating the precursor-derived splice junction phosphate into the mature tRNA as a canonical 3',5'-phosphodiester. May act as an RNA ligase with broad substrate specificity, and may function toward other RNAs. The chain is RNA-splicing ligase RtcB homolog from Nematostella vectensis (Starlet sea anemone).